The primary structure comprises 580 residues: XK-related protein 7 (580 aa).

Residues 1–22 show a composition bias toward low complexity; it reads MAAKSDGAAAVAGPGPEGPAGA. Residues 1 to 28 form a disordered region; it reads MAAKSDGAAAVAGPGPEGPAGADRGGAG. 8 helical membrane-spanning segments follow: residues 59–79, 89–109, 260–280, 303–323, 326–346, 355–375, 384–404, and 415–435; these read WVLC…WLAA, YFGL…LLSF, LLTA…LASY, VLWH…FASV, LYFG…VIQG, WEEI…WFNV, VTLY…FWYS, and LILV…MCVY. The tract at residues 470 to 516 is disordered; that stretch reads TSPPRSLPRTTGAERDGAAVGGERAGTPTPPVFQVRPGLPPTPVARP.

The protein belongs to the XK family.

The protein localises to the cell membrane. This is XK-related protein 7 from Rattus norvegicus (Rat).